The following is a 390-amino-acid chain: Probable purine permease 18 (390 aa).

Over residues 1 to 14 the composition is skewed to polar residues; it reads MEMTEASKQTTAEG. The interval 1 to 23 is disordered; it reads MEMTEASKQTTAEGSANPEPDQI. The residue at position 25 (S25) is a Phosphoserine. Transmembrane regions (helical) follow at residues 39–59, 81–101, 120–140, 148–168, 176–196, 211–231, 250–270, 297–317, 324–344, and 348–368; these read ISVS…MLLL, WLQA…FFIF, LILL…LFAL, GVFT…AAII, WIIL…PEFG, WLTF…QLCF, VIEM…VGLF, IGLA…VLYV, VVHM…FDFM, and FSWP…SYFY.

This sequence belongs to the purine permeases (TC 2.A.7.14) family.

Its subcellular location is the membrane. The polypeptide is Probable purine permease 18 (PUP18) (Arabidopsis thaliana (Mouse-ear cress)).